The following is a 436-amino-acid chain: 3-ketoacyl-CoA thiolase (436 aa).

Catalysis depends on cysteine 99, which acts as the Acyl-thioester intermediate. Active-site proton acceptor residues include histidine 392 and cysteine 422.

Belongs to the thiolase-like superfamily. Thiolase family. Heterotetramer of two alpha chains (FadJ) and two beta chains (FadI).

Its subcellular location is the cytoplasm. It carries out the reaction an acyl-CoA + acetyl-CoA = a 3-oxoacyl-CoA + CoA. Its pathway is lipid metabolism; fatty acid beta-oxidation. Functionally, catalyzes the final step of fatty acid oxidation in which acetyl-CoA is released and the CoA ester of a fatty acid two carbons shorter is formed. In Salmonella typhi, this protein is 3-ketoacyl-CoA thiolase.